The primary structure comprises 213 residues: GrpE protein homolog, mitochondrial (213 aa).

The disordered stretch occupies residues 35–55 (STEKQPEEATEQKATESSPEV). The segment covering 38-55 (KQPEEATEQKATESSPEV) has biased composition (basic and acidic residues).

The protein belongs to the GrpE family. In terms of assembly, probable component of the PAM complex at least composed of a mitochondrial HSP70 protein, Roe1, TIM44, blp/TIM16 and TIM14.

It localises to the mitochondrion matrix. Essential component of the PAM complex, a complex required for the translocation of transit peptide-containing proteins from the inner membrane into the mitochondrial matrix in an ATP-dependent manner. Seems to control the nucleotide-dependent binding of mitochondrial HSP70 to substrate proteins. This chain is GrpE protein homolog, mitochondrial (Roe1), found in Drosophila melanogaster (Fruit fly).